Reading from the N-terminus, the 255-residue chain is Spectinomycin 9-adenylyltransferase (255 aa).

The catalysed reaction is spectinomycin + ATP = 9-O-adenylylspectinomycin + diphosphate. Mediates bacterial resistance to the antibiotic spectinomycin but not streptomycin. The chain is Spectinomycin 9-adenylyltransferase from Enterococcus faecalis (Streptococcus faecalis).